The following is a 343-amino-acid chain: Cytoplasmic tRNA 2-thiolation protein 1 (343 aa).

This sequence belongs to the TtcA family. CTU1/NCS6/ATPBD3 subfamily.

The protein localises to the cytoplasm. The protein operates within tRNA modification; 5-methoxycarbonylmethyl-2-thiouridine-tRNA biosynthesis. Functionally, plays a central role in 2-thiolation of mcm(5)S(2)U at tRNA wobble positions of tRNA(Lys), tRNA(Glu) and tRNA(Gln). Directly binds tRNAs and probably acts by catalyzing adenylation of tRNAs, an intermediate required for 2-thiolation. It is unclear whether it acts as a sulfurtransferase that transfers sulfur from thiocarboxylated URM1 onto the uridine of tRNAs at wobble position. The chain is Cytoplasmic tRNA 2-thiolation protein 1 from Drosophila yakuba (Fruit fly).